The following is a 106-amino-acid chain: MTYVIAEPCVDVLDKACIEECPVDCIYEGGRMLYIHPDECVDCGACEPVCPVEAIYYEDDVPDEWAAYTKANVDFFDELGSPGGAAKVGKVDRDVEPVSSLPPQGE.

[3Fe-4S] cluster is bound by residues cysteine 9 and cysteine 17. [4Fe-4S] cluster is bound by residues cysteine 21, cysteine 40, cysteine 43, and cysteine 46. The 4Fe-4S ferredoxin-type domain maps to 31–60; sequence RMLYIHPDECVDCGACEPVCPVEAIYYEDD. Cysteine 50 provides a ligand contact to [3Fe-4S] cluster. Residues 84-106 are disordered; that stretch reads GAAKVGKVDRDVEPVSSLPPQGE.

[4Fe-4S] cluster serves as cofactor. [3Fe-4S] cluster is required as a cofactor.

In terms of biological role, ferredoxins are iron-sulfur proteins that transfer electrons in a wide variety of metabolic reactions. In Saccharopolyspora erythraea (Streptomyces erythraeus), this protein is Ferredoxin (fdxA).